Reading from the N-terminus, the 158-residue chain is SsrA-binding protein (158 aa).

It belongs to the SmpB family.

Its subcellular location is the cytoplasm. In terms of biological role, required for rescue of stalled ribosomes mediated by trans-translation. Binds to transfer-messenger RNA (tmRNA), required for stable association of tmRNA with ribosomes. tmRNA and SmpB together mimic tRNA shape, replacing the anticodon stem-loop with SmpB. tmRNA is encoded by the ssrA gene; the 2 termini fold to resemble tRNA(Ala) and it encodes a 'tag peptide', a short internal open reading frame. During trans-translation Ala-aminoacylated tmRNA acts like a tRNA, entering the A-site of stalled ribosomes, displacing the stalled mRNA. The ribosome then switches to translate the ORF on the tmRNA; the nascent peptide is terminated with the 'tag peptide' encoded by the tmRNA and targeted for degradation. The ribosome is freed to recommence translation, which seems to be the essential function of trans-translation. In Roseiflexus sp. (strain RS-1), this protein is SsrA-binding protein.